Reading from the N-terminus, the 37-residue chain is Large ribosomal subunit protein bL36 (37 aa).

It belongs to the bacterial ribosomal protein bL36 family.

This chain is Large ribosomal subunit protein bL36, found in Pasteurella multocida (strain Pm70).